The sequence spans 195 residues: Putative lysine exporter (195 aa).

Helical transmembrane passes span 4–24 (LLSA…WLHF), 30–50 (LYVL…NGIS), 61–81 (LMMG…SAFF), 86–106 (ITQG…SVVL), 117–137 (IAFF…PLFM), and 170–190 (PIAI…LVFF).

The protein belongs to the LysO family.

The protein resides in the cell inner membrane. Mediates export of lysine. This chain is Putative lysine exporter, found in Haemophilus influenzae (strain ATCC 51907 / DSM 11121 / KW20 / Rd).